A 908-amino-acid chain; its full sequence is 26S proteasome non-ATPase regulatory subunit 2 (908 aa).

Residue Met1 is modified to N-acetylmethionine. The interval 1–52 (MEEGGRDKAPVQPQQSPAAALGGTDEKPSGKERRDAGDKDKEQELSEEDKQL) is disordered. The segment covering 10–20 (PVQPQQSPAAA) has biased composition (low complexity). Residue Ser16 is modified to Phosphoserine. Position 24 is a phosphothreonine (Thr24). Over residues 24-52 (TDEKPSGKERRDAGDKDKEQELSEEDKQL) the composition is skewed to basic and acidic residues. Ser29 and Ser147 each carry phosphoserine. Tyr194 is subject to Phosphotyrosine. A phosphoserine mark is found at Ser361 and Ser363. PC repeat units follow at residues 409 to 442 (SAAA…YIKS), 443 to 479 (GALL…TMRL), 480 to 514 (GSIF…SMEV), 517 to 551 (VTAL…TELK), and 560 to 589 (LGLG…PFRS). Position 551 is an N6-acetyllysine (Lys551). Positions 623-643 (KEKEEDKDKKEKKDKDKKEAP) are enriched in basic and acidic residues. The segment at 623 to 645 (KEKEEDKDKKEKKDKDKKEAPAD) is disordered. PC repeat units follow at residues 692-723 (LALA…EVSY) and 742-757 (AAML…KDPN). Positions 708–903 (DTLSKFSHDA…LEGFVILRKN (196 aa)) are required for interaction with UBLCP1.

It belongs to the proteasome subunit S2 family. Component of the 19S proteasome regulatory particle complex. The 26S proteasome consists of a 20S core particle (CP) and two 19S regulatory subunits (RP). The regulatory particle is made of a lid composed of 9 subunits, a base containing 6 ATPases and few additional components including PSMD2. Interacts with RPGRIP1L. Interacts with CRY1 in a KDM8-dependent manner. Interacts (via C-terminus) with phosphatase UBLCP1 (via ubiquitin-like domain); the interaction recruits UBLCP1 to the 19S regulatory particle where it dephosphorylates 19S subunit PSMC2/RPT1 which impairs PSMC2 ATPase activity and disrupts 26S proteasome assembly.

Its function is as follows. Component of the 26S proteasome, a multiprotein complex involved in the ATP-dependent degradation of ubiquitinated proteins. This complex plays a key role in the maintenance of protein homeostasis by removing misfolded or damaged proteins, which could impair cellular functions, and by removing proteins whose functions are no longer required. Therefore, the proteasome participates in numerous cellular processes, including cell cycle progression, apoptosis, or DNA damage repair. In terms of biological role, binds to the intracellular domain of tumor necrosis factor type 1 receptor. The binding domain of TRAP1 and TRAP2 resides outside the death domain of TNFR1. This Pongo abelii (Sumatran orangutan) protein is 26S proteasome non-ATPase regulatory subunit 2 (PSMD2).